A 655-amino-acid chain; its full sequence is Endoplasmic reticulum chaperone BiP (655 aa).

The signal sequence occupies residues 1–19 (MMKFTVVAAALLLLGAVRA). The interval 1–81 (MMKFTVVAAA…EGERLIGDAA (81 aa)) is required for interaction with ELAPOR1. 37–40 (GTTY) is an ATP binding site. Serine 87 carries the phosphoserine modification. Lysine 97 is a binding site for ATP. Residue lysine 126 is modified to N6-acetyllysine. Positions 126 to 281 (KPYIQVDIGG…KKKTGKDVRK (156 aa)) are nucleotide-binding (NBD). Tyrosine 161 carries the 3'-nitrotyrosine modification. N6-acetyllysine is present on lysine 214. ATP is bound at residue 228–230 (GGT). The residue at position 272 (lysine 272) is an N6-acetyllysine. An ATP-binding site is contributed by 294–301 (EKAKRALS). Position 327 is an N6-acetyllysine (lysine 327). Lysine 353 participates in a covalent cross-link: Glycyl lysine isopeptide (Lys-Gly) (interchain with G-Cter in SUMO2). An N6-acetyllysine; alternate modification is found at lysine 354. Lysine 354 is covalently cross-linked (Glycyl lysine isopeptide (Lys-Gly) (interchain with G-Cter in SUMO1); alternate). 365-368 (GSTR) contacts ATP. The interval 410 to 420 (QDTGDLVLLDV) is interdomain linker. The segment at 421 to 501 (CPLTLGIETV…PRGVPQIEVT (81 aa)) is substrate-binding (SBD). N6-succinyllysine is present on lysine 448. Arginine 493 is subject to Omega-N-methylarginine. Threonine 519 bears the O-AMP-threonine; alternate mark. Threonine 519 is modified (phosphothreonine; alternate). Lysine 586 is modified (N6,N6,N6-trimethyllysine; by METTL21A; in vitro). An N6,N6-dimethyllysine; alternate modification is found at lysine 586. N6-methyllysine; alternate is present on lysine 586. Lysine 592 is modified (N6-methyllysine). The segment at 632 to 655 (ISKLYGSGGPPPTGEEDTSEKDEL) is disordered. A phosphothreonine mark is found at threonine 644 and threonine 649. The segment covering 645–655 (GEEDTSEKDEL) has biased composition (acidic residues). Serine 650 carries the post-translational modification Phosphoserine. Residues 652–655 (KDEL) carry the Prevents secretion from ER motif.

This sequence belongs to the heat shock protein 70 family. In terms of assembly, monomer and homooligomer; homooligomerization via the interdomain linker inactivates the chaperone activity and acts as a storage of HSPA5/BiP molecules. Interacts with DNAJC1 (via J domain). Component of an EIF2 complex at least composed of CELF1/CUGBP1, CALR, CALR3, EIF2S1, EIF2S2, HSP90B1 and HSPA5. Part of a large chaperone multiprotein complex comprising DNAJB11, HSP90B1, HSPA5, HYOU, PDIA2, PDIA4, PDIA6, PPIB, SDF2L1, UGGT1 and very small amounts of ERP29, but not, or at very low levels, CALR nor CANX. Interacts with TMEM132A and TRIM21. May form a complex with ERLEC1, OS9, SEL1L and SYVN1. Interacts with DNAJC10. Interacts with DNAJB9/ERdj4; leading to recruit HSPA5/BiP to ERN1/IRE1. Interacts with ERN1/IRE1 (via luminal domain); the interaction takes place following interaction with DNAJB9/ERdj4 and leads to inactivate ERN1/IRE1, the interaction also competitively inhibits ERN1 interaction with MANF. Interacts directly with MANF (via SAP domain); the interaction inhibits ATP binding to HSPA5/BiP and subsequent nucleotide exchange. Interacts with ERN1 (via luminal domain); the interaction competitively inhibits ERN1 interaction with MANF. Interacts with EIF2AK3/PERK (via luminal domain); interaction leads to inactivate EIF2AK3/PERK. Interacts with MX1. Interacts with METTL23. Interacts with CEMIP; the interaction induces calcium leakage from the endoplasmic reticulum and cell migration. Interacts with PCSK4 form; the interaction takes place in the endoplasmic reticulum. Interacts with CIPC. Interacts with CCDC88B (via C-terminus); the interaction opposes ERN1-mediated JNK activation, protecting against apoptosis. Interacts with INPP5K; necessary for INPP5K localization at the endoplasmic reticulum. Interacts with MANF; the interaction is direct. Interacts with LOXL2; leading to activate the ERN1/IRE1-XBP1 pathway of the unfolded protein response. Interacts with CLU under stressed condition; interaction increases CLU protein stability; facilitates its retrotranslocation and redistribution to the mitochondria; cooperatively suppress stress-induced apoptosis by stabilizing mitochondrial membrane integrity. Interacts with CCDC47. Interacts with CLN3. Interacts with ELAPOR1; may regulate the function of HSPA5 in apoptosis and cell proliferation. Interacts with CASP7. Interacts with ILDR2; the interaction stabilizes ILDR2 expression. Interacts with ADAM7. In unstressed cells, AMPylation at Thr-519 by FICD inactivates the chaperome activity: AMPylated form is locked in a relatively inert state and only weakly stimulated by J domain-containing proteins. In response to endoplasmic reticulum stress, de-AMPylation by the same protein, FICD, restores the chaperone activity. In terms of tissue distribution, expressed in sperm (at protein level).

It localises to the endoplasmic reticulum lumen. The protein resides in the melanosome. It is found in the cytoplasm. Its subcellular location is the cell surface. It catalyses the reaction ATP + H2O = ADP + phosphate + H(+). With respect to regulation, the chaperone activity is regulated by ATP-induced allosteric coupling of the nucleotide-binding (NBD) and substrate-binding (SBD) domains. In the ADP-bound and nucleotide-free (apo) states, the two domains have little interaction. In contrast, in the ATP-bound state the two domains are tightly coupled, which results in drastically accelerated kinetics in both binding and release of polypeptide substrates. J domain-containing co-chaperones (DNAJB9/ERdj4 or DNAJC10/ERdj5) stimulate the ATPase activity and are required for efficient substrate recognition by HSPA5/BiP. Homooligomerization inactivates participating HSPA5/BiP protomers and probably act as reservoirs to store HSPA5/BiP molecules when they are not needed by the cell. Its function is as follows. Endoplasmic reticulum chaperone that plays a key role in protein folding and quality control in the endoplasmic reticulum lumen. Involved in the correct folding of proteins and degradation of misfolded proteins via its interaction with DNAJC10/ERdj5, probably to facilitate the release of DNAJC10/ERdj5 from its substrate. Acts as a key repressor of the EIF2AK3/PERK and ERN1/IRE1-mediated unfolded protein response (UPR). In the unstressed endoplasmic reticulum, recruited by DNAJB9/ERdj4 to the luminal region of ERN1/IRE1, leading to disrupt the dimerization of ERN1/IRE1, thereby inactivating ERN1/IRE1. Also binds and inactivates EIF2AK3/PERK in unstressed cells. Accumulation of misfolded protein in the endoplasmic reticulum causes release of HSPA5/BiP from ERN1/IRE1 and EIF2AK3/PERK, allowing their homodimerization and subsequent activation. Plays an auxiliary role in post-translational transport of small presecretory proteins across endoplasmic reticulum (ER). May function as an allosteric modulator for SEC61 channel-forming translocon complex, likely cooperating with SEC62 to enable the productive insertion of these precursors into SEC61 channel. Appears to specifically regulate translocation of precursors having inhibitory residues in their mature region that weaken channel gating. May also play a role in apoptosis and cell proliferation. The sequence is that of Endoplasmic reticulum chaperone BiP from Mus musculus (Mouse).